The primary structure comprises 379 residues: Alanine racemase (379 aa).

Residue lysine 40 is the Proton acceptor; specific for D-alanine of the active site. Lysine 40 is subject to N6-(pyridoxal phosphate)lysine. Arginine 138 contacts substrate. The active-site Proton acceptor; specific for L-alanine is tyrosine 267. Position 315 (methionine 315) interacts with substrate.

It belongs to the alanine racemase family. It depends on pyridoxal 5'-phosphate as a cofactor.

It carries out the reaction L-alanine = D-alanine. It functions in the pathway amino-acid biosynthesis; D-alanine biosynthesis; D-alanine from L-alanine: step 1/1. In terms of biological role, catalyzes the interconversion of L-alanine and D-alanine. May also act on other amino acids. The sequence is that of Alanine racemase (alr) from Halothermothrix orenii (strain H 168 / OCM 544 / DSM 9562).